The following is a 350-amino-acid chain: Vetispiradiene synthase 3 (350 aa).

Positions 103, 107, 246, 250, and 254 each coordinate Mg(2+). Positions D103 to D107 match the DDXXD motif motif.

It belongs to the terpene synthase family. Tpsa subfamily. Mg(2+) serves as cofactor.

The protein localises to the cytoplasm. It catalyses the reaction (2E,6E)-farnesyl diphosphate = (-)-vetispiradiene + diphosphate. It participates in secondary metabolite biosynthesis; terpenoid biosynthesis. Its function is as follows. Sesquiterpene synthase that catalyzes the formation of vetispiradiene from trans,trans-farnesyl diphosphate. The initial internal cyclization produces the monocyclic intermediate germacrene A. This Hyoscyamus muticus (Egyptian henbane) protein is Vetispiradiene synthase 3.